The following is a 412-amino-acid chain: UDP-galactose transporter homolog 1 (412 aa).

Residues 3 to 23 (VLRLAVCISGVYAAFLLWAIA) traverse the membrane as a helical segment. The tract at residues 31-51 (FPSVHPHPHQQPHSPSDPPPG) is disordered. Transmembrane regions (helical) follow at residues 58–78 (LFLNFAQALASSLSALCYLSF), 139–159 (LLALLVQVSVFQTIASPIGFL), 197–217 (YIVVALVTVGISMFMLFAETS), and 222–242 (GGSDSMWGLVLLLVNLLIDGL). N-linked (GlcNAc...) asparagine glycosylation occurs at Asn-244. Transmembrane regions (helical) follow at residues 262–282 (MMFTMALTTQIILLPLLVLPL), 325–345 (SALAPLFAYALLGGLGQLFIF), 355–375 (TLVMVTVTRKLFTMLLSVVVF), and 379–399 (LTKGQWLGVGVVFAGIGVEAG).

This sequence belongs to the nucleotide-sugar transporter family. SLC35B subfamily.

Its subcellular location is the endoplasmic reticulum membrane. Functionally, may be involved in specific transport of UDP-Gal from the cytosol to the Golgi lumen. Involved in the maintenance of optimal conditions for the folding of secretory pathway proteins in the endoplasmic reticulum. The polypeptide is UDP-galactose transporter homolog 1 (HUT1-A) (Cryptococcus neoformans var. neoformans serotype D (strain JEC21 / ATCC MYA-565) (Filobasidiella neoformans)).